The following is a 584-amino-acid chain: Actin-binding protein IPP (584 aa).

The BTB domain maps to 37-104 (CDVQLQVGKE…IYTGVVNIAV (68 aa)). Kelch repeat units lie at residues 296-343 (YTRL…VVGG), 344-390 (MVYA…VCYG), 391-437 (AIYA…EMQG), 439-485 (IYAV…ALND), 487-533 (IYAI…TVNG), and 535-583 (LYVS…GVAV).

In terms of tissue distribution, expression seems confined to tissues derived from trophectoderm and primitive endoderm.

The protein resides in the cytoplasm. It localises to the cytoskeleton. In terms of biological role, may play a role in organizing the actin cytoskeleton. The chain is Actin-binding protein IPP (Ipp) from Mus musculus (Mouse).